Here is a 287-residue protein sequence, read N- to C-terminus: 4-diphosphocytidyl-2-C-methyl-D-erythritol kinase (287 aa).

Residue Lys-14 is part of the active site. 96–106 (PWGAGLGGGSS) is an ATP binding site. The active site involves Asp-138.

This sequence belongs to the GHMP kinase family. IspE subfamily.

The catalysed reaction is 4-CDP-2-C-methyl-D-erythritol + ATP = 4-CDP-2-C-methyl-D-erythritol 2-phosphate + ADP + H(+). It functions in the pathway isoprenoid biosynthesis; isopentenyl diphosphate biosynthesis via DXP pathway; isopentenyl diphosphate from 1-deoxy-D-xylulose 5-phosphate: step 3/6. Its function is as follows. Catalyzes the phosphorylation of the position 2 hydroxy group of 4-diphosphocytidyl-2C-methyl-D-erythritol. In Methylibium petroleiphilum (strain ATCC BAA-1232 / LMG 22953 / PM1), this protein is 4-diphosphocytidyl-2-C-methyl-D-erythritol kinase.